Reading from the N-terminus, the 415-residue chain is Gamma-glutamyl phosphate reductase (415 aa).

The protein belongs to the gamma-glutamyl phosphate reductase family.

It is found in the cytoplasm. The enzyme catalyses L-glutamate 5-semialdehyde + phosphate + NADP(+) = L-glutamyl 5-phosphate + NADPH + H(+). It functions in the pathway amino-acid biosynthesis; L-proline biosynthesis; L-glutamate 5-semialdehyde from L-glutamate: step 2/2. Functionally, catalyzes the NADPH-dependent reduction of L-glutamate 5-phosphate into L-glutamate 5-semialdehyde and phosphate. The product spontaneously undergoes cyclization to form 1-pyrroline-5-carboxylate. The protein is Gamma-glutamyl phosphate reductase of Mycolicibacterium gilvum (strain PYR-GCK) (Mycobacterium gilvum (strain PYR-GCK)).